The primary structure comprises 199 residues: Probable GTP-binding protein EngB (199 aa).

In terms of domain architecture, EngB-type G spans 22 to 195 (QLPEIALSGR…WEWIEQQCDI (174 aa)). GTP is bound by residues 30-37 (GRSNVGKS), 57-61 (GKTQT), 75-78 (DVPG), 142-145 (TKMD), and 174-176 (FSA). Mg(2+) contacts are provided by Ser37 and Thr59.

Belongs to the TRAFAC class TrmE-Era-EngA-EngB-Septin-like GTPase superfamily. EngB GTPase family. It depends on Mg(2+) as a cofactor.

In terms of biological role, necessary for normal cell division and for the maintenance of normal septation. In Latilactobacillus sakei subsp. sakei (strain 23K) (Lactobacillus sakei subsp. sakei), this protein is Probable GTP-binding protein EngB.